The following is an 88-amino-acid chain: Guanine nucleotide-binding protein subunit gamma (88 aa).

C84 is lipidated: S-palmitoyl cysteine. C85 bears the Cysteine methyl ester mark. Residue C85 is the site of S-farnesyl cysteine attachment. Positions 86–88 are cleaved as a propeptide — removed in mature form; that stretch reads TIM.

This sequence belongs to the G protein gamma family. G proteins are composed of 3 units, alpha, beta and gamma.

Its subcellular location is the membrane. The chain is Guanine nucleotide-binding protein subunit gamma from Candida glabrata (strain ATCC 2001 / BCRC 20586 / JCM 3761 / NBRC 0622 / NRRL Y-65 / CBS 138) (Yeast).